Consider the following 571-residue polypeptide: Sulfite reductase [NADPH] hemoprotein beta-component (571 aa).

Cysteine 436, cysteine 442, cysteine 481, and cysteine 485 together coordinate [4Fe-4S] cluster. A siroheme-binding site is contributed by cysteine 485.

The protein belongs to the nitrite and sulfite reductase 4Fe-4S domain family. As to quaternary structure, alpha(8)-beta(8). The alpha component is a flavoprotein, the beta component is a hemoprotein. Requires siroheme as cofactor. [4Fe-4S] cluster is required as a cofactor.

The catalysed reaction is hydrogen sulfide + 3 NADP(+) + 3 H2O = sulfite + 3 NADPH + 4 H(+). It participates in sulfur metabolism; hydrogen sulfide biosynthesis; hydrogen sulfide from sulfite (NADPH route): step 1/1. Functionally, component of the sulfite reductase complex that catalyzes the 6-electron reduction of sulfite to sulfide. This is one of several activities required for the biosynthesis of L-cysteine from sulfate. This Bacillus velezensis (strain DSM 23117 / BGSC 10A6 / LMG 26770 / FZB42) (Bacillus amyloliquefaciens subsp. plantarum) protein is Sulfite reductase [NADPH] hemoprotein beta-component.